The chain runs to 393 residues: Pyridoxamine--pyruvate transaminase (393 aa).

The pyridoxal 5'-phosphate site is built by Glu-68, Tyr-95, and Thr-146. An N6-(pyridoxal phosphate)lysine modification is found at Lys-197. Arg-345 is a pyridoxal 5'-phosphate binding site.

This sequence belongs to the class-V pyridoxal-phosphate-dependent aminotransferase family. As to quaternary structure, homotetramer. Pyridoxal 5'-phosphate serves as cofactor.

The enzyme catalyses pyridoxamine + pyruvate = pyridoxal + L-alanine. In terms of biological role, catalyzes a reversible transamination reaction between pyridoxamine and pyruvate to form pyridoxal and L-alanine. The chain is Pyridoxamine--pyruvate transaminase (ppaT) from Mesorhizobium japonicum (strain LMG 29417 / CECT 9101 / MAFF 303099) (Mesorhizobium loti (strain MAFF 303099)).